Here is a 308-residue protein sequence, read N- to C-terminus: SAP30-binding protein (308 aa).

The interval 15-101 (AEDSEPESDG…EAEKRDPQEL (87 aa)) is disordered. Acidic residues predominate over residues 16–26 (EDSEPESDGEA). Phosphoserine is present on residues S18, S22, S43, and S52. Positions 57-78 (DEDGYEEEEDENSRQSEDDDSE) are enriched in acidic residues. Basic and acidic residues predominate over residues 79-99 (TEKPEADDPKDNTEAEKRDPQ). A Glycyl lysine isopeptide (Lys-Gly) (interchain with G-Cter in SUMO2) cross-link involves residue K95. Phosphoserine is present on S113. Residues K220, K304, and K305 each participate in a glycyl lysine isopeptide (Lys-Gly) (interchain with G-Cter in SUMO2) cross-link.

This sequence belongs to the HCNGP family. Interacts with histone deacetylase complex subunit SAP30.

It localises to the nucleus. Plays a role in transcriptional repression by promoting histone deacetylase activity, leading to deacetylation of histone H3. May be involved in the regulation of beta-2-microglobulin genes. Functionally, (Microbial infection) Involved in transcriptional repression of HHV-1 genes TK and gC. The chain is SAP30-binding protein from Homo sapiens (Human).